The chain runs to 259 residues: Putative hydro-lyase Rxyl_2409 (259 aa).

The disordered stretch occupies residues 1–24 (MGAPGAAEARERIRRGEHAGPTAG). A compositionally biased stretch (basic and acidic residues) spans 8–18 (EARERIRRGEH).

Belongs to the D-glutamate cyclase family.

The sequence is that of Putative hydro-lyase Rxyl_2409 from Rubrobacter xylanophilus (strain DSM 9941 / JCM 11954 / NBRC 16129 / PRD-1).